Here is a 231-residue protein sequence, read N- to C-terminus: Ribonuclease HII (231 aa).

In terms of domain architecture, RNase H type-2 spans 23–214 (GPVAGVDEAG…VAKAHREWAL (192 aa)). A divalent metal cation-binding residues include Asp-29, Glu-30, and Asp-123.

This sequence belongs to the RNase HII family. The cofactor is Mn(2+). It depends on Mg(2+) as a cofactor.

It is found in the cytoplasm. The enzyme catalyses Endonucleolytic cleavage to 5'-phosphomonoester.. Its function is as follows. Endonuclease that specifically degrades the RNA of RNA-DNA hybrids. This is Ribonuclease HII from Corynebacterium efficiens (strain DSM 44549 / YS-314 / AJ 12310 / JCM 11189 / NBRC 100395).